Here is a 91-residue protein sequence, read N- to C-terminus: PqqA binding protein (91 aa).

Belongs to the PqqD family. As to quaternary structure, monomer. Interacts with PqqE.

It participates in cofactor biosynthesis; pyrroloquinoline quinone biosynthesis. Functionally, functions as a PqqA binding protein and presents PqqA to PqqE, in the pyrroloquinoline quinone (PQQ) biosynthetic pathway. The protein is PqqA binding protein of Pseudomonas fluorescens (strain Pf0-1).